We begin with the raw amino-acid sequence, 480 residues long: UDP-glucose 6-dehydrogenase 4 (480 aa).

NAD(+) is bound by residues 8–13, Asp33, Arg38, 86–90, 127–128, and Glu161; these read GAGYVG, VNTPT, and ST. Residues 157 to 161, 216 to 223, and 256 to 269 contribute to the substrate site; these read EFLAE, KLAANAFL, and RIGP…VGFG. The active-site Nucleophile is the Cys272. 272 to 275 provides a ligand contact to NAD(+); it reads CFQK. 334-335 contributes to the substrate binding site; it reads FK. Arg342 lines the NAD(+) pocket. Phosphoserine is present on Ser393. Residue Arg447 coordinates substrate.

Belongs to the UDP-glucose/GDP-mannose dehydrogenase family.

The catalysed reaction is UDP-alpha-D-glucose + 2 NAD(+) + H2O = UDP-alpha-D-glucuronate + 2 NADH + 3 H(+). The protein operates within nucleotide-sugar biosynthesis; UDP-alpha-D-glucuronate biosynthesis; UDP-alpha-D-glucuronate from UDP-alpha-D-glucose: step 1/1. In terms of biological role, involved in the biosynthesis of UDP-glucuronic acid (UDP-GlcA), providing nucleotide sugars for cell-wall polymers. In Oryza sativa subsp. japonica (Rice), this protein is UDP-glucose 6-dehydrogenase 4 (UGD4).